An 827-amino-acid chain; its full sequence is Putative transcriptional regulatory protein C16G5.16 (827 aa).

The segment at residues 16-42 (CDECHRRKIKCDQRRPCSNCIAYNYEC) is a DNA-binding region (zn(2)-C6 fungal-type). 3 disordered regions span residues 80–114 (LKLPSFLAPPNDKDSPVNQSPWKRSDSSKRSSSQD), 158–193 (TVPNPVQESNSSSSQPDPLSFPYLPPTPAEDEHKKP), and 794–827 (QPPSMTNQVAYPTVRDGSNNSPDHPSSSNSKRTE). Residues 102–112 (KRSDSSKRSSS) are compositionally biased toward basic and acidic residues. Serine 112 carries the phosphoserine modification. Composition is skewed to low complexity over residues 159 to 179 (VPNPVQESNSSSSQPDPLSFP) and 811 to 827 (SNNSPDHPSSSNSKRTE).

Belongs to the ASG1 family.

Its subcellular location is the cytoplasm. It localises to the nucleus. This chain is Putative transcriptional regulatory protein C16G5.16, found in Schizosaccharomyces pombe (strain 972 / ATCC 24843) (Fission yeast).